Reading from the N-terminus, the 650-residue chain is Macrolide export ATP-binding/permease protein MacB (650 aa).

Positions 6-244 (LKLTGITRRF…ASSPEAASSP (239 aa)) constitute an ABC transporter domain. 42-49 (GASGSGKS) is an ATP binding site. The segment at 227-246 (QTRPEEATASSPEAASSPAT) is disordered. The span at 233–246 (ATASSPEAASSPAT) shows a compositional bias: low complexity. The next 4 membrane-spanning stretches (helical) occupy residues 275 to 295 (FLTMLGIIIGIASVVSVVALG), 523 to 543 (LTLLVSMIALISLLVGGIGVM), 580 to 600 (LVCLFGGIAGVALSLAIGVLF), and 615 to 635 (SIIAAFLCSSLIGIIFGFFPA).

It belongs to the ABC transporter superfamily. Macrolide exporter (TC 3.A.1.122) family. In terms of assembly, homodimer. Part of the tripartite efflux system MacAB-TolC, which is composed of an inner membrane transporter, MacB, a periplasmic membrane fusion protein, MacA, and an outer membrane component, TolC. The complex forms a large protein conduit and can translocate molecules across both the inner and outer membranes. Interacts with MacA.

Its subcellular location is the cell inner membrane. Functionally, part of the tripartite efflux system MacAB-TolC. MacB is a non-canonical ABC transporter that contains transmembrane domains (TMD), which form a pore in the inner membrane, and an ATP-binding domain (NBD), which is responsible for energy generation. Confers resistance against macrolides. This Pectobacterium atrosepticum (strain SCRI 1043 / ATCC BAA-672) (Erwinia carotovora subsp. atroseptica) protein is Macrolide export ATP-binding/permease protein MacB.